Here is a 417-residue protein sequence, read N- to C-terminus: MFSSTTLHHLPRPNLLLPRKVISRRMSTNPAIEPKVRKFESVEGVDIGSRNKSDGFFAIPLYLSKLVALYNCISLSRIGTSNENFVFSGIRFRLVSYNILAQVYVKSALLPHSPPACLKWKARSHAILSVLKNLQADFFCLQEVDEYDSFYRNNMDSLGYSGIYIQRTGQRKRDGCAIFYKPSCAELVTKERIEYNDLVDSIKADSVSCSEQKIETSNEGKDSRKDSRDLNDPLVRLKRDCVGIMAAFRINKPFQHIVIVANTHLYWDPELADVKLAQAKYLLSRLAQFKTLISDEFECTPSLLLAGDFNSIPGDMVYSYLVSGNAKPTETIEEEEAPVPLSSVYEVTRGEPKFTNCTPGFTNTLDYIFISPSDFIKPVSILQLPEPDSPDVVGFLPNHHHPSDHLPIGAEFEIRRE.

Phe2 bears the N-acetylserine mark. Position 143 (Glu143) interacts with Mg(2+).

The protein belongs to the CCR4/nocturin family. As to quaternary structure, component of the CCR4-NOT complex, at least composed of CRR4 and CAF1 proteins. Forms homooligomers. It depends on Mg(2+) as a cofactor.

It is found in the nucleus. The protein localises to the cytoplasm. It catalyses the reaction Exonucleolytic cleavage of poly(A) to 5'-AMP.. In terms of biological role, acts as a catalytic component of the CCR4-NOT core complex, which in the nucleus seems to be a general transcription factor, and in the cytoplasm the major mRNA deadenylase involved in mRNA turnover. Transcriptional regulator of circadian rhythms with poly(A)-degrading activity that affects the expression and rhythmicity of the clock core oscillator genes TOC1 and CCA1. Deadenylation may be a mechanism involved in the regulation of the circadian clock. May play a negative role in response against oxidative stress. Possesses magnesium-dependent poly(A)-specific exoribonuclease activity in vitro and is almost inactive with poly(U), poly(C) and poly(G) as substrates. The polypeptide is Carbon catabolite repressor protein 4 homolog 4 (Arabidopsis thaliana (Mouse-ear cress)).